We begin with the raw amino-acid sequence, 269 residues long: MSIKLVAVDIDGTLLTDDRRITDDVFQAVQEAKAQGVHVVIATGRPIAGVISLLEQLELNHKGNHVITFNGGLVQDAETGEEIVKELMTYDDYLETEFLSRKLGVHMHAITKEGIYTANRNIGKYTVHESTLVNMPIFYRTPEEMTNKEIIKMMMIDEPDLLDAAIKQIPQHFFDKYTIVKSTPFYLEFMPKTVSKGNAIKHLAKKLGLDMSQTMAIGDAENDRAMLEVVANPVVMENGVPELKKIAKYITKSNNDSGVAHAIRKWVLN.

Catalysis depends on aspartate 9, which acts as the Nucleophile. Aspartate 9 serves as a coordination point for Mg(2+). Isoleucine 10 is a phosphate binding site. Aspartate 11 contacts Mg(2+). Residues 43-44 (TG) and lysine 196 each bind phosphate. A Mg(2+)-binding site is contributed by aspartate 219. Asparagine 222 is a phosphate binding site.

Requires Mg(2+) as cofactor.

The chain is Putative phosphatase M6_Spy0533 from Streptococcus pyogenes serotype M6 (strain ATCC BAA-946 / MGAS10394).